We begin with the raw amino-acid sequence, 334 residues long: Biotin synthase (334 aa).

In terms of domain architecture, Radical SAM core spans 41–260 (TRLETASLLS…IAVARIMMPR (220 aa)). Residues cysteine 56, cysteine 60, and cysteine 63 each coordinate [4Fe-4S] cluster. Residues cysteine 100, cysteine 131, cysteine 191, and arginine 264 each contribute to the [2Fe-2S] cluster site.

It belongs to the radical SAM superfamily. Biotin synthase family. Homodimer. [4Fe-4S] cluster is required as a cofactor. It depends on [2Fe-2S] cluster as a cofactor.

It catalyses the reaction (4R,5S)-dethiobiotin + (sulfur carrier)-SH + 2 reduced [2Fe-2S]-[ferredoxin] + 2 S-adenosyl-L-methionine = (sulfur carrier)-H + biotin + 2 5'-deoxyadenosine + 2 L-methionine + 2 oxidized [2Fe-2S]-[ferredoxin]. Its pathway is cofactor biosynthesis; biotin biosynthesis; biotin from 7,8-diaminononanoate: step 2/2. Its function is as follows. Catalyzes the conversion of dethiobiotin (DTB) to biotin by the insertion of a sulfur atom into dethiobiotin via a radical-based mechanism. This chain is Biotin synthase, found in Bradyrhizobium sp. (strain ORS 278).